The following is a 288-amino-acid chain: Acetyl-coenzyme A carboxylase carboxyl transferase subunit beta (288 aa).

The CoA carboxyltransferase N-terminal domain maps to 34–288 (LFAKCPACKH…HLVAFHGGGQ (255 aa)). Positions 38, 41, 56, and 59 each coordinate Zn(2+). Residues 38-59 (CPACKHMIYKKDLGLAKICPTC) form a C4-type zinc finger.

Belongs to the AccD/PCCB family. In terms of assembly, acetyl-CoA carboxylase is a heterohexamer composed of biotin carboxyl carrier protein (AccB), biotin carboxylase (AccC) and two subunits each of ACCase subunit alpha (AccA) and ACCase subunit beta (AccD). The cofactor is Zn(2+).

The protein localises to the cytoplasm. The enzyme catalyses N(6)-carboxybiotinyl-L-lysyl-[protein] + acetyl-CoA = N(6)-biotinyl-L-lysyl-[protein] + malonyl-CoA. It functions in the pathway lipid metabolism; malonyl-CoA biosynthesis; malonyl-CoA from acetyl-CoA: step 1/1. Functionally, component of the acetyl coenzyme A carboxylase (ACC) complex. Biotin carboxylase (BC) catalyzes the carboxylation of biotin on its carrier protein (BCCP) and then the CO(2) group is transferred by the transcarboxylase to acetyl-CoA to form malonyl-CoA. The polypeptide is Acetyl-coenzyme A carboxylase carboxyl transferase subunit beta (Streptococcus dysgalactiae subsp. equisimilis (strain GGS_124)).